Reading from the N-terminus, the 150-residue chain is Cytochrome c-type biogenesis protein CcmE (150 aa).

Residues 1 to 7 (MTRKQKR) lie on the Cytoplasmic side of the membrane. The chain crosses the membrane as a helical; Signal-anchor for type II membrane protein span at residues 8-28 (LAIIGGGVAFLTAAVLLVMFA). At 29–150 (FSQAVAYFYV…VTLGGEENIR (122 aa)) the chain is on the periplasmic side. Positions 123 and 127 each coordinate heme.

This sequence belongs to the CcmE/CycJ family.

It localises to the cell inner membrane. Its function is as follows. Heme chaperone required for the biogenesis of c-type cytochromes. Transiently binds heme delivered by CcmC and transfers the heme to apo-cytochromes in a process facilitated by CcmF and CcmH. The chain is Cytochrome c-type biogenesis protein CcmE from Rhizobium meliloti (strain 1021) (Ensifer meliloti).